We begin with the raw amino-acid sequence, 226 residues long: Large ribosomal subunit protein uL3 (226 aa).

Positions 136 to 162 (NFGSQRASHGNSRSHNVPGSISMAQDP) are disordered. Over residues 137–158 (FGSQRASHGNSRSHNVPGSISM) the composition is skewed to polar residues. Glutamine 160 carries the post-translational modification N5-methylglutamine.

Belongs to the universal ribosomal protein uL3 family. As to quaternary structure, part of the 50S ribosomal subunit. Forms a cluster with proteins L14 and L19. In terms of processing, methylated by PrmB.

Its function is as follows. One of the primary rRNA binding proteins, it binds directly near the 3'-end of the 23S rRNA, where it nucleates assembly of the 50S subunit. The polypeptide is Large ribosomal subunit protein uL3 (Methylibium petroleiphilum (strain ATCC BAA-1232 / LMG 22953 / PM1)).